The following is a 328-amino-acid chain: Glyoxylate reductase/hydroxypyruvate reductase (328 aa).

At S36 the chain carries Phosphoserine. Residue 83 to 84 (VG) coordinates substrate. NADP(+) is bound by residues 162–164 (GRI), 185–188 (RQPR), S217, and I243. Residues R245, D269, and 293–296 (HIGS) each bind substrate. H293 functions as the Proton donor in the catalytic mechanism. Residue G295 coordinates NADP(+). T298 bears the Phosphothreonine mark.

It belongs to the D-isomer specific 2-hydroxyacid dehydrogenase family. As to quaternary structure, homodimer.

It carries out the reaction glycolate + NADP(+) = glyoxylate + NADPH + H(+). The enzyme catalyses (R)-glycerate + NAD(+) = 3-hydroxypyruvate + NADH + H(+). It catalyses the reaction (R)-glycerate + NADP(+) = 3-hydroxypyruvate + NADPH + H(+). Its function is as follows. Enzyme with hydroxy-pyruvate reductase, glyoxylate reductase and D-glycerate dehydrogenase enzymatic activities. Reduces hydroxypyruvate to D-glycerate, glyoxylate to glycolate oxidizes D-glycerate to hydroxypyruvate. This Mus musculus (Mouse) protein is Glyoxylate reductase/hydroxypyruvate reductase (Grhpr).